The chain runs to 51 residues: Large ribosomal subunit protein eL39-like (51 aa).

The protein belongs to the eukaryotic ribosomal protein eL39 family. As to quaternary structure, component of a male germ cell-specific 60S large ribosomal subunit (LSU), which contains RPL10L and RPL39L, instead of RPL10 and RPL39 paralogs. The composition of the rest of the complex is similar to classical ribosomes. Highly expressed in spermatocytes and spermatids. Highly expressed in embryonic stem cells.

It localises to the cytoplasm. Its function is as follows. Male germ cell-specific component of the ribosome, which is required for the formation of sperm and male fertility. Replaces the RPL39 paralog in the ribosome of male germ cells. The ribosome is a large ribonucleoprotein complex responsible for the synthesis of proteins in the cell. The male germ cell-specific ribosome displays a ribosomal polypeptide exit tunnel of distinct size and charge states compared with the classical ribosome. It is responsible for regulating the biosynthesis and folding of a subset of male germ-cell-specific proteins that are essential for the formation of sperm. This Mus musculus (Mouse) protein is Large ribosomal subunit protein eL39-like.